Here is a 452-residue protein sequence, read N- to C-terminus: UDP-N-acetylmuramoyl-L-alanine--L-glutamate ligase (452 aa).

118–124 (GSKGKST) serves as a coordination point for ATP.

Belongs to the MurCDEF family. MurD2 subfamily.

The protein resides in the cytoplasm. The catalysed reaction is UDP-N-acetyl-alpha-D-muramoyl-L-alanine + L-glutamate + ATP = UDP-N-acetyl-alpha-D-muramoyl-L-alanyl-L-glutamate + ADP + phosphate + H(+). Its pathway is cell wall biogenesis; peptidoglycan biosynthesis. Its function is as follows. Cell wall formation. Catalyzes the addition of L-glutamate to the nucleotide precursor UDP-N-acetylmuramoyl-L-alanine. In Micromonospora sp. (strain ATCC 39149 / NRRL 15099 / SCC 1413), this protein is UDP-N-acetylmuramoyl-L-alanine--L-glutamate ligase.